The chain runs to 169 residues: Crossover junction endodeoxyribonuclease RuvC (169 aa).

Active-site residues include aspartate 11, glutamate 71, and histidine 143. Mg(2+)-binding residues include aspartate 11, glutamate 71, and histidine 143.

Belongs to the RuvC family. In terms of assembly, homodimer which binds Holliday junction (HJ) DNA. The HJ becomes 2-fold symmetrical on binding to RuvC with unstacked arms; it has a different conformation from HJ DNA in complex with RuvA. In the full resolvosome a probable DNA-RuvA(4)-RuvB(12)-RuvC(2) complex forms which resolves the HJ. Requires Mg(2+) as cofactor.

It localises to the cytoplasm. The catalysed reaction is Endonucleolytic cleavage at a junction such as a reciprocal single-stranded crossover between two homologous DNA duplexes (Holliday junction).. Its function is as follows. The RuvA-RuvB-RuvC complex processes Holliday junction (HJ) DNA during genetic recombination and DNA repair. Endonuclease that resolves HJ intermediates. Cleaves cruciform DNA by making single-stranded nicks across the HJ at symmetrical positions within the homologous arms, yielding a 5'-phosphate and a 3'-hydroxyl group; requires a central core of homology in the junction. The consensus cleavage sequence is 5'-(A/T)TT(C/G)-3'. Cleavage occurs on the 3'-side of the TT dinucleotide at the point of strand exchange. HJ branch migration catalyzed by RuvA-RuvB allows RuvC to scan DNA until it finds its consensus sequence, where it cleaves and resolves the cruciform DNA. The protein is Crossover junction endodeoxyribonuclease RuvC of Mesorhizobium japonicum (strain LMG 29417 / CECT 9101 / MAFF 303099) (Mesorhizobium loti (strain MAFF 303099)).